A 396-amino-acid chain; its full sequence is 2,3-diketo-5-methylthiopentyl-1-phosphate enolase (396 aa).

The active-site Proton acceptor is Lys-85. Substrate contacts are provided by residues Lys-134, 160–163, His-251, Gly-323, and 345–346; these read KDDE and GG. 3 residues coordinate Mg(2+): Lys-160, Asp-162, and Glu-163. The residue at position 160 (Lys-160) is an N6-carboxylysine.

This sequence belongs to the RuBisCO large chain family. Type IV subfamily. Homodimer. Mg(2+) serves as cofactor.

The catalysed reaction is 5-methylsulfanyl-2,3-dioxopentyl phosphate = 2-hydroxy-5-methylsulfanyl-3-oxopent-1-enyl phosphate. It functions in the pathway amino-acid biosynthesis; L-methionine biosynthesis via salvage pathway; L-methionine from S-methyl-5-thio-alpha-D-ribose 1-phosphate: step 3/6. Catalyzes the enolization of 2,3-diketo-5-methylthiopentyl-1-phosphate (DK-MTP-1-P) into 2-hydroxy-3-keto-5-methylthiopentenyl-1-phosphate (HK-MTPenyl-1-P). The chain is 2,3-diketo-5-methylthiopentyl-1-phosphate enolase from Exiguobacterium sibiricum (strain DSM 17290 / CCUG 55495 / CIP 109462 / JCM 13490 / 255-15).